Reading from the N-terminus, the 773-residue chain is Disintegrin and metalloproteinase domain-containing protein 11 (773 aa).

The signal sequence occupies residues 1–24 (MRRLRRWAIAALLLLPLLPPPGLG). A propeptide spanning residues 25–229 (ALGPRGALHW…PNWPKLRRKR (205 aa)) is cleaved from the precursor. The segment at 36–82 (SSAHVGSPESPEGSEVTEPSRLVRQSSGGEVRKPQLDTRVRQDPPRG) is disordered. Residues 65–79 (EVRKPQLDTRVRQDP) show a composition bias toward basic and acidic residues. Asn100 and Asn167 each carry an N-linked (GlcNAc...) asparagine glycan. Residues 230–738 (QVRRGHPTVH…ERYKGPSGTN (509 aa)) are Extracellular-facing. The Peptidase M12B domain occupies 243 to 442 (KYVELIVIND…GGGSCLFNKP (200 aa)). The interval 336–773 (GRTFQSTSSG…NIRRGRSGGA (438 aa)) is required for localization to cerebellar cortex basket cell terminals. Also required for localization of KCNA1, KCNA2, DLG4 and ADAM22 to cerebellar cortex basket cell terminal perisomatic axons and pinceaux. 4 cysteine pairs are disulfide-bonded: Cys353–Cys437, Cys396–Cys421, Cys398–Cys405, and Cys507–Cys527. One can recognise a Disintegrin domain in the interval 448–535 (PPECGNGFVE…QCPPNLHKLD (88 aa)). Residues Asn609 and Asn677 are each glycosylated (N-linked (GlcNAc...) asparagine). Cystine bridges form between Cys681–Cys696, Cys690–Cys702, and Cys704–Cys713. One can recognise an EGF-like domain in the interval 681–713 (CPGSGERRICSHHGVCSNEGKCICQPDWTGKDC). A helical membrane pass occupies residues 739–759 (IIIGSIAGAVLVAAIVLGGTG). The Cytoplasmic portion of the chain corresponds to 760–773 (WGFKNIRRGRSGGA).

Interacts with LGI1 and LGI4. Interacts with KCNA1/KV1.1, KCNA2/KV1.2, DLG4/PSD-95 and ADAM22. Post-translationally, the precursor is cleaved by a furin endopeptidase. As to expression, abundantly expressed in cerebellar cortex basket cell terminals and pinceaux, weakly expressed in Purkinje cells (at protein level). Weakly expressed in the heart. Abundantly in expressed in neurons throughout the central nervous system including the telencephalon, diencephalic and brainstem nuclei, cerebellum and spinal cord. Expressed in the peripheral nervous system trigeminal and dorsal root ganglia. Expressed in the ganglion and bipolar cells of the retinae and weakly in the cornea of the eyes. Expressed in the hepatocytes of the parenchyma and hepatic lobules of the liver. Expressed in distinct focal areas in the juxtamedullary cortex of the kidney. Expressed in spermatocytes in the seminiferous tubules of the testes. Expressed in the stratum spinosum of the stratified squamous epithelia of the tongue and esophagus.

The protein resides in the presynaptic cell membrane. The protein localises to the perikaryon. Its subcellular location is the cell projection. It is found in the axon. Probable ligand for integrin in the brain. This is a non catalytic metalloprotease-like protein. Required for localization of the potassium channel subunit proteins KCNA1/KV1.1 and KCNA2/KV1.2 at cerebellar cortex basket cell distal terminals, is thereby involved in ephaptic inhibitory synchronization of Purkinje cell firing and response to stress. Plays a role in spatial learning and motor coordination. Involved in the nociceptive pain response to chemical-derived stimulation. This is Disintegrin and metalloproteinase domain-containing protein 11 (Adam11) from Mus musculus (Mouse).